The following is a 285-amino-acid chain: MDIFLAILPAIFWGSIVLFNVKLGGGPYSQTLGTTFGALIFSIVVYIFMKPVLTPTVIGVGIVSGLFWALGQANQLKSIDLMGVSRTMPISTGLQLVSTTLFGVIVFHEWSTIISVVLGVLALVCIIIGVILTSLQSEEEKNAEQAGNFKRGIIILLISTVGYLVYVVVIRLFNVDGWSALLPQAVGMVLGGILLTFKHHPFNKYAIRNIIPGLIWAAGNMFLFISQPRVGVATSFSLSQMGIIISTLGGILILGERKTKRQLTGIVVGIVFIIAAGIMLGIAKS.

10 consecutive transmembrane segments (helical) span residues 4 to 21 (FLAI…LFNV), 26 to 48 (GPYS…VYIF), 52 to 71 (VLTP…WALG), 84 to 106 (VSRT…GVIV), 110 to 132 (WSTI…GVIL), 153 to 175 (IIIL…LFNV), 180 to 197 (ALLP…LLTF), 210 to 227 (IIPG…FISQ), 232 to 254 (VATS…ILIL), and 266 to 283 (IVVG…LGIA).

This sequence belongs to the GRP transporter (TC 2.A.7.5) family.

It is found in the cell membrane. Its function is as follows. Involved in the uptake of glucose. In Bacillus anthracis, this protein is Probable glucose uptake protein GlcU (glcU).